Here is a 244-residue protein sequence, read N- to C-terminus: DNA polymerase sliding clamp (244 aa).

This sequence belongs to the PCNA family. Homotrimer. The subunits circularize to form a toroid; DNA passes through its center. Replication factor C (RFC) is required to load the toroid on the DNA.

In terms of biological role, sliding clamp subunit that acts as a moving platform for DNA processing. Responsible for tethering the catalytic subunit of DNA polymerase to DNA during high-speed replication. In conjunction with replication factor C (RFC) stimulates DNA synthesis by PolB, relieving inhibition by replication protein A (RPA). The chain is DNA polymerase sliding clamp from Methanothermobacter thermautotrophicus (strain ATCC 29096 / DSM 1053 / JCM 10044 / NBRC 100330 / Delta H) (Methanobacterium thermoautotrophicum).